The chain runs to 240 residues: uncharacterized protein (240 aa).

The segment at 93 to 160 (QEASGCTVGE…AGGGAAASGQ (68 aa)) is disordered. Low complexity-rich tracts occupy residues 110–119 (AQPSQPAQGG) and 129–150 (GGAEEAGGAQASQPAESAPAEN).

This is an uncharacterized protein from Streptomyces viridochromogenes.